The primary structure comprises 273 residues: Ribosomal RNA small subunit methyltransferase A (273 aa).

S-adenosyl-L-methionine contacts are provided by asparagine 18, leucine 20, glycine 45, glutamate 66, aspartate 91, and asparagine 113.

The protein belongs to the class I-like SAM-binding methyltransferase superfamily. rRNA adenine N(6)-methyltransferase family. RsmA subfamily.

It is found in the cytoplasm. It carries out the reaction adenosine(1518)/adenosine(1519) in 16S rRNA + 4 S-adenosyl-L-methionine = N(6)-dimethyladenosine(1518)/N(6)-dimethyladenosine(1519) in 16S rRNA + 4 S-adenosyl-L-homocysteine + 4 H(+). Functionally, specifically dimethylates two adjacent adenosines (A1518 and A1519) in the loop of a conserved hairpin near the 3'-end of 16S rRNA in the 30S particle. May play a critical role in biogenesis of 30S subunits. The sequence is that of Ribosomal RNA small subunit methyltransferase A from Escherichia coli (strain SE11).